A 348-amino-acid polypeptide reads, in one-letter code: Endoplasmic reticulum junction formation protein lunapark-A (348 aa).

The Cytoplasmic segment spans residues 1–43; that stretch reads MSVFCLQAKPTTVEILEGIDKDIQILEDYSVKYQRQMKAVVGR. Residues 44-64 form a helical membrane-spanning segment; it reads LLLYSILLYLMAGVVVYSWYL. The Lumenal segment spans residues 65-67; that stretch reads PEQ. The chain crosses the membrane as a helical span at residues 68 to 88; it reads LMGRLVLGLPFLLFPLLVWIL. Over 89 to 348 the chain is Cytoplasmic; the sequence is RKVLILFFAR…EEDKQSDSGD (260 aa). Residues 105–126 are a coiled coil; the sequence is FKLEDLKAQKRKILEDVMETET. The tract at residues 142-211 is disordered; sequence KKKTDFDSTP…HSAPGGPPER (70 aa). A C4-type; plays a role in ER morphology zinc finger spans residues 277–302; it reads CQQCLSHNGMALKEEFEYVAFRCAYC. Positions 313–348 are disordered; it reads PQAPRLPETAGEPKLPCDLNSSSCAAEEDKQSDSGD. Positions 339-348 are enriched in basic and acidic residues; it reads EEDKQSDSGD.

The protein belongs to the lunapark family. In terms of assembly, homodimer; homodimerization requires the C4-type zinc finger motif and decreases during mitosis in a phosphorylation-dependent manner. Phosphorylated. Phosphorylation occurs during interphase. Phosphorylation also occurs during mitosis; these phosphorylations reduce both its homodimerization and the ER three-way tubular junction formation.

The protein localises to the endoplasmic reticulum membrane. In terms of biological role, endoplasmic reticulum (ER)-shaping membrane protein that plays a role in determining ER morphology. Involved in the stabilization of nascent three-way ER tubular junctions within the ER network. May also play a role as a curvature-stabilizing protein within three-way ER tubular junction network. This is Endoplasmic reticulum junction formation protein lunapark-A (lnpka) from Takifugu rubripes (Japanese pufferfish).